The following is a 768-amino-acid chain: DNA replication licensing factor MCM3 homolog 1 (768 aa).

The MCM domain maps to Thr-290–Ala-497. Position 340 to 347 (Gly-340 to Ser-347) interacts with ATP. The Arginine finger signature appears at Ser-472 to Asp-475. The segment at Met-662–Pro-687 is disordered. Residues Ala-672 to Ser-682 are compositionally biased toward gly residues.

This sequence belongs to the MCM family.

Its subcellular location is the nucleus. It carries out the reaction ATP + H2O = ADP + phosphate + H(+). In terms of biological role, acts as a factor that allows the DNA to undergo a single round of replication per cell cycle. Required for DNA replication and cell proliferation. May act as a component of the MCM complex which is the putative replicative helicase of the replication licensing system in eukaryotic cells. The polypeptide is DNA replication licensing factor MCM3 homolog 1 (ROA1) (Zea mays (Maize)).